The sequence spans 369 residues: UDP-N-acetylglucosamine--N-acetylmuramyl-(pentapeptide) pyrophosphoryl-undecaprenol N-acetylglucosamine transferase (369 aa).

UDP-N-acetyl-alpha-D-glucosamine is bound by residues 10–12 (TGG), asparagine 124, arginine 166, serine 196, and glutamine 300.

Belongs to the glycosyltransferase 28 family. MurG subfamily.

The protein localises to the cell membrane. The catalysed reaction is di-trans,octa-cis-undecaprenyl diphospho-N-acetyl-alpha-D-muramoyl-L-alanyl-D-glutamyl-meso-2,6-diaminopimeloyl-D-alanyl-D-alanine + UDP-N-acetyl-alpha-D-glucosamine = di-trans,octa-cis-undecaprenyl diphospho-[N-acetyl-alpha-D-glucosaminyl-(1-&gt;4)]-N-acetyl-alpha-D-muramoyl-L-alanyl-D-glutamyl-meso-2,6-diaminopimeloyl-D-alanyl-D-alanine + UDP + H(+). It participates in cell wall biogenesis; peptidoglycan biosynthesis. Functionally, cell wall formation. Catalyzes the transfer of a GlcNAc subunit on undecaprenyl-pyrophosphoryl-MurNAc-pentapeptide (lipid intermediate I) to form undecaprenyl-pyrophosphoryl-MurNAc-(pentapeptide)GlcNAc (lipid intermediate II). The polypeptide is UDP-N-acetylglucosamine--N-acetylmuramyl-(pentapeptide) pyrophosphoryl-undecaprenol N-acetylglucosamine transferase (Desulfitobacterium hafniense (strain Y51)).